Here is a 343-residue protein sequence, read N- to C-terminus: Putative mediator of RNA polymerase II transcription subunit 4 (343 aa).

The stretch at 86 to 125 forms a coiled coil; sequence LKKLEKHQKIQKEITEIQKEIEEKDKLISTLALNLKDIES. The interval 247-343 is disordered; that stretch reads ISSPFSIGGN…DEESEEVEWD (97 aa). Residues 271–316 show a composition bias toward low complexity; it reads QQQQQQQQQPQQQLSQSQQSQQQTESELQPIQSILQPPQQLNIDLD. A compositionally biased stretch (acidic residues) spans 317–343; that stretch reads LNPDLDSSGDDDDEDDDDEESEEVEWD.

Belongs to the Mediator complex subunit 4 family. As to quaternary structure, component of the Mediator complex.

Its subcellular location is the nucleus. Functionally, component of the Mediator complex, a coactivator involved in the regulated transcription of nearly all RNA polymerase II-dependent genes. Mediator functions as a bridge to convey information from gene-specific regulatory proteins to the basal RNA polymerase II transcription machinery. Mediator is recruited to promoters by direct interactions with regulatory proteins and serves as a scaffold for the assembly of a functional preinitiation complex with RNA polymerase II and the general transcription factors. The sequence is that of Putative mediator of RNA polymerase II transcription subunit 4 (med4) from Dictyostelium discoideum (Social amoeba).